The following is an 82-amino-acid chain: uncharacterized protein (82 aa).

The span at Asp-55–Ser-64 shows a compositional bias: polar residues. The segment at Asp-55–Asn-82 is disordered.

This is an uncharacterized protein from Dictyostelium discoideum (Social amoeba).